Reading from the N-terminus, the 507-residue chain is Histidine ammonia-lyase (507 aa).

The 5-imidazolinone (Ala-Gly) cross-link spans 141 to 143; the sequence is ASG. Ser-142 carries the post-translational modification 2,3-didehydroalanine (Ser).

This sequence belongs to the PAL/histidase family. Post-translationally, contains an active site 4-methylidene-imidazol-5-one (MIO), which is formed autocatalytically by cyclization and dehydration of residues Ala-Ser-Gly.

The protein localises to the cytoplasm. It catalyses the reaction L-histidine = trans-urocanate + NH4(+). It functions in the pathway amino-acid degradation; L-histidine degradation into L-glutamate; N-formimidoyl-L-glutamate from L-histidine: step 1/3. The protein is Histidine ammonia-lyase of Burkholderia cenocepacia (strain ATCC BAA-245 / DSM 16553 / LMG 16656 / NCTC 13227 / J2315 / CF5610) (Burkholderia cepacia (strain J2315)).